The chain runs to 106 residues: Putative double-stranded DNA mimic protein VV1_3059 (106 aa).

This sequence belongs to the putative dsDNA mimic protein family.

May act as a double-stranded DNA (dsDNA) mimic. Probably regulates the activity of a dsDNA-binding protein. This Vibrio vulnificus (strain CMCP6) protein is Putative double-stranded DNA mimic protein VV1_3059.